A 370-amino-acid polypeptide reads, in one-letter code: Uroporphyrinogen decarboxylase (370 aa).

Residues 29–33 (RQAGR), Asp-79, Tyr-155, Ser-210, and His-342 each bind substrate.

The protein belongs to the uroporphyrinogen decarboxylase family. As to quaternary structure, homodimer.

It is found in the cytoplasm. The enzyme catalyses uroporphyrinogen III + 4 H(+) = coproporphyrinogen III + 4 CO2. Its pathway is porphyrin-containing compound metabolism; protoporphyrin-IX biosynthesis; coproporphyrinogen-III from 5-aminolevulinate: step 4/4. Its function is as follows. Catalyzes the decarboxylation of four acetate groups of uroporphyrinogen-III to yield coproporphyrinogen-III. The sequence is that of Uroporphyrinogen decarboxylase from Delftia acidovorans (strain DSM 14801 / SPH-1).